Here is a 624-residue protein sequence, read N- to C-terminus: Leucine-rich repeat, immunoglobulin-like domain and transmembrane domain-containing protein 1 (624 aa).

The first 21 residues, 1 to 21 (MWVALGMLWLLALGGPHQAWG), serve as a signal peptide directing secretion. Positions 22 to 59 (FCPSECSCSLRILSDGSKARTVVCSDPDLTLPPASIPP) constitute an LRRNT domain. Over 22-527 (FCPSECSCSL…EVVDAEGTQR (506 aa)) the chain is Lumenal. 5 LRR repeats span residues 60-81 (DTCK…TFRP), 84-105 (RLEQ…MLRG), 108-129 (RLRE…ALRD), 132-153 (QLQL…AAHF), and 156-177 (NLTF…LLDV). A glycan (N-linked (GlcNAc...) asparagine) is linked at asparagine 156. In terms of domain architecture, LRRCT spans 201 to 254 (NPWVCDCRLYDLVHLLDGWVSSNLIFIEARLRCASPRSLAGVAFSQLELRKCQS). Residues 267–336 (PLGSTVLLRC…YICQAKNFLG (70 aa)) form the Ig-like C2-type domain. Cysteine 276 and cysteine 329 form a disulfide bridge. 2 N-linked (GlcNAc...) asparagine glycosylation sites follow: asparagine 297 and asparagine 456. One can recognise a Fibronectin type-III domain in the interval 431–519 (MVRSLKVVGD…QCVIFSTDEV (89 aa)). One copy of the LRR 6 repeat lies at 526–549 (QRLINMVVISVAAIIALPPTLLVC). A helical membrane pass occupies residues 528-548 (LINMVVISVAAIIALPPTLLV). Topologically, residues 549–624 (CCGALRRRCH…GGRRINEYFC (76 aa)) are cytoplasmic.

May form a homodimer. Interacts with LRIT2; may form a heterodimer with LRIT2. Interacts (via its N-terminal extracellular domain) with metabotropic glutamate receptor GRM6. Interacts (via its extreme C-terminus) with the scaffold protein FRMPD2 (via the third PDZ domain); the interaction leads to their colocalization in photoreceptor synapses. In terms of tissue distribution, expressed predominantly in developing photoreceptor and bipolar cells.

The protein localises to the endoplasmic reticulum membrane. It is found in the cell projection. It localises to the dendrite. In terms of biological role, photoreceptor synaptic protein essential for normal vision. Involved in synapse formation in cone photoreceptor cells. In Mus musculus (Mouse), this protein is Leucine-rich repeat, immunoglobulin-like domain and transmembrane domain-containing protein 1 (Lrit1).